A 379-amino-acid chain; its full sequence is RIB43A-like with coiled-coils protein 1 (379 aa).

The interval 1–21 (MYNIKQSTDTKEAAAIEARRN) is disordered. Residues 8-21 (TDTKEAAAIEARRN) show a composition bias toward basic and acidic residues. Coiled coils occupy residues 82 to 111 (KEEADRTRQLAKKVQEFREQKQQLKNGREF) and 216 to 304 (NANK…QAEK).

It belongs to the RIB43A family. Microtubule inner protein component of sperm flagellar doublet microtubules.

The protein localises to the cytoplasm. The protein resides in the cytoskeleton. It localises to the flagellum axoneme. In Homo sapiens (Human), this protein is RIB43A-like with coiled-coils protein 1 (RIBC1).